The sequence spans 84 residues: Beta-cardiotoxin CTX14 (84 aa).

A signal peptide spans 1 to 21 (MKTLLLTLVVVTIVCLDLGYT). Cystine bridges form between Cys-24–Cys-43, Cys-36–Cys-61, Cys-65–Cys-76, and Cys-77–Cys-82.

Belongs to the three-finger toxin family. Short-chain subfamily. Aminergic toxin sub-subfamily. In terms of tissue distribution, expressed by the venom gland.

It localises to the secreted. Its function is as follows. Acts as a beta-blocker by binding to beta-1 and beta-2 adrenergic receptors (ADRB1 and ADRB2). It dose-dependently decreases the heart rate (bradycardia), whereas conventional cardiotoxins increases it. At 100 mg/kg, intraperitoneal injection into mice provokes labored breathing, impaired locomotion, lack of response to external stimuli, and death (after 30 minutes). The chain is Beta-cardiotoxin CTX14 from Ophiophagus hannah (King cobra).